The sequence spans 238 residues: Ribonuclease 3 (238 aa).

One can recognise an RNase III domain in the interval 11–136 (RARLEAAIGY…LIAAIYLDGG (126 aa)). Glutamate 49 serves as a coordination point for Mg(2+). Residue aspartate 53 is part of the active site. 2 residues coordinate Mg(2+): aspartate 122 and glutamate 125. Glutamate 125 is an active-site residue. Residues 161 to 230 (DAKTELQEWA…AMKLLEREGV (70 aa)) enclose the DRBM domain.

This sequence belongs to the ribonuclease III family. As to quaternary structure, homodimer. Mg(2+) is required as a cofactor.

Its subcellular location is the cytoplasm. The enzyme catalyses Endonucleolytic cleavage to 5'-phosphomonoester.. Functionally, digests double-stranded RNA. Involved in the processing of primary rRNA transcript to yield the immediate precursors to the large and small rRNAs (23S and 16S). Processes some mRNAs, and tRNAs when they are encoded in the rRNA operon. Processes pre-crRNA and tracrRNA of type II CRISPR loci if present in the organism. This chain is Ribonuclease 3, found in Rhizobium meliloti (strain 1021) (Ensifer meliloti).